Reading from the N-terminus, the 88-residue chain is Beta-insect excitatory toxin LqhIT1b (88 aa).

A signal peptide spans 1–18 (MKFFLLFLVVLPIMGVLG). Positions 20–83 (KNGYAVDSKG…ISDTTKKYCD (64 aa)) constitute an LCN-type CS-alpha/beta domain. 4 disulfides stabilise this stretch: cysteine 34-cysteine 55, cysteine 40-cysteine 60, cysteine 44-cysteine 62, and cysteine 56-cysteine 82.

This sequence belongs to the long (4 C-C) scorpion toxin superfamily. Sodium channel inhibitor family. Beta subfamily. Expressed by the venom gland.

It localises to the secreted. Its function is as follows. Excitatory insect toxins induce a spastic paralysis. They bind voltage-independently at site-4 of sodium channels (Nav) and shift the voltage of activation toward more negative potentials thereby affecting sodium channel activation and promoting spontaneous and repetitive firing. The polypeptide is Beta-insect excitatory toxin LqhIT1b (Leiurus hebraeus (Hebrew deathstalker scorpion)).